The chain runs to 343 residues: tRNA N6-adenosine threonylcarbamoyltransferase (343 aa).

Fe cation-binding residues include histidine 116 and histidine 120. Substrate is bound by residues 138–142, aspartate 171, glycine 184, aspartate 188, and asparagine 277; that span reads LVSGG. Position 306 (aspartate 306) interacts with Fe cation.

This sequence belongs to the KAE1 / TsaD family. The cofactor is Fe(2+).

The protein resides in the cytoplasm. The catalysed reaction is L-threonylcarbamoyladenylate + adenosine(37) in tRNA = N(6)-L-threonylcarbamoyladenosine(37) in tRNA + AMP + H(+). In terms of biological role, required for the formation of a threonylcarbamoyl group on adenosine at position 37 (t(6)A37) in tRNAs that read codons beginning with adenine. Is involved in the transfer of the threonylcarbamoyl moiety of threonylcarbamoyl-AMP (TC-AMP) to the N6 group of A37, together with TsaE and TsaB. TsaD likely plays a direct catalytic role in this reaction. This is tRNA N6-adenosine threonylcarbamoyltransferase from Ligilactobacillus salivarius (strain UCC118) (Lactobacillus salivarius).